We begin with the raw amino-acid sequence, 429 residues long: C4-dicarboxylate transport protein (429 aa).

8 consecutive transmembrane segments (helical) span residues 9–29 (VLYV…HFYP), 45–65 (LIKM…IAGM), 79–99 (LLYF…ATHI), 149–169 (GEIL…AHLG), 185–205 (VLFG…FGAM), 223–243 (LIGT…GTIA), 308–328 (IYMT…LTWM), and 356–376 (AATL…ILGI).

It belongs to the dicarboxylate/amino acid:cation symporter (DAACS) (TC 2.A.23) family.

Its subcellular location is the cell inner membrane. Its function is as follows. Responsible for the transport of dicarboxylates such as succinate, fumarate, and malate from the periplasm across the membrane. The protein is C4-dicarboxylate transport protein of Burkholderia ambifaria (strain ATCC BAA-244 / DSM 16087 / CCUG 44356 / LMG 19182 / AMMD) (Burkholderia cepacia (strain AMMD)).